The following is a 378-amino-acid chain: Spermidine/putrescine import ATP-binding protein PotA (378 aa).

Residues 18-248 (VLLSGISKSF…PKNLFVAGFI (231 aa)) form the ABC transporter domain. 50–57 (GPSGCGKT) contributes to the ATP binding site.

Belongs to the ABC transporter superfamily. Spermidine/putrescine importer (TC 3.A.1.11.1) family. In terms of assembly, the complex is composed of two ATP-binding proteins (PotA), two transmembrane proteins (PotB and PotC) and a solute-binding protein (PotD).

The protein resides in the cell inner membrane. The enzyme catalyses ATP + H2O + polyamine-[polyamine-binding protein]Side 1 = ADP + phosphate + polyamineSide 2 + [polyamine-binding protein]Side 1.. Functionally, part of the ABC transporter complex PotABCD involved in spermidine/putrescine import. Responsible for energy coupling to the transport system. This chain is Spermidine/putrescine import ATP-binding protein PotA, found in Salmonella paratyphi A (strain ATCC 9150 / SARB42).